The following is a 144-amino-acid chain: NADH-ubiquinone oxidoreductase chain 6 (144 aa).

5 helical membrane-spanning segments follow: residues 1-21, 25-45, 46-66, 79-99, and 108-128; these read MVKV…INID, SSFF…MSMH, IWFS…ILVY, YMAV…VLTY, and FYYS…LFFM.

It belongs to the complex I subunit 6 family.

It localises to the mitochondrion membrane. The catalysed reaction is a ubiquinone + NADH + 5 H(+)(in) = a ubiquinol + NAD(+) + 4 H(+)(out). Functionally, core subunit of the mitochondrial membrane respiratory chain NADH dehydrogenase (Complex I) that is believed to belong to the minimal assembly required for catalysis. Complex I functions in the transfer of electrons from NADH to the respiratory chain. The immediate electron acceptor for the enzyme is believed to be ubiquinone. The polypeptide is NADH-ubiquinone oxidoreductase chain 6 (Caenorhabditis elegans).